The primary structure comprises 136 residues: Urease subunit beta (136 aa).

It belongs to the urease beta subunit family. In terms of assembly, heterotrimer of UreA (gamma), UreB (beta) and UreC (alpha) subunits. Three heterotrimers associate to form the active enzyme.

The protein localises to the cytoplasm. The catalysed reaction is urea + 2 H2O + H(+) = hydrogencarbonate + 2 NH4(+). It participates in nitrogen metabolism; urea degradation; CO(2) and NH(3) from urea (urease route): step 1/1. This is Urease subunit beta from Staphylococcus aureus (strain Mu3 / ATCC 700698).